The primary structure comprises 116 residues: MPYPVGQTTGLVGLAVCNTPHERLRILYTKILDVLEEIPKNAAYRKYTEQITNEKLAMVKAEPDVKKLEDQLQGGQLEEVILQAEHELNLARKMKEWKLWEPLVEEPPADQWKWPI.

N6-acetyllysine occurs at positions 30, 46, and 60. Lys-98 is subject to N6-acetyllysine; alternate. Lys-98 is subject to N6-succinyllysine; alternate.

This sequence belongs to the complex I NDUFA5 subunit family. Complex I is composed of 45 different subunits.

It is found in the mitochondrion inner membrane. Its function is as follows. Accessory subunit of the mitochondrial membrane respiratory chain NADH dehydrogenase (Complex I), that is believed not to be involved in catalysis. Complex I functions in the transfer of electrons from NADH to the respiratory chain. The immediate electron acceptor for the enzyme is believed to be ubiquinone. This Pongo abelii (Sumatran orangutan) protein is NADH dehydrogenase [ubiquinone] 1 alpha subcomplex subunit 5 (NDUFA5).